A 693-amino-acid polypeptide reads, in one-letter code: Polyribonucleotide nucleotidyltransferase (693 aa).

2 residues coordinate Mg(2+): aspartate 489 and aspartate 495. The region spanning 556-615 (PQIHVMNINPAKIKDVVGRGGATVKGIVEKTGAQIDTSDSGEVKVFAKDKKSMDMAVAMI) is the KH domain. The S1 motif domain occupies 625–693 (GQVYKGKIVK…GRVKLSLVAR (69 aa)).

This sequence belongs to the polyribonucleotide nucleotidyltransferase family. In terms of assembly, component of the RNA degradosome, which is a multiprotein complex involved in RNA processing and mRNA degradation. Requires Mg(2+) as cofactor.

Its subcellular location is the cytoplasm. It carries out the reaction RNA(n+1) + phosphate = RNA(n) + a ribonucleoside 5'-diphosphate. In terms of biological role, involved in mRNA degradation. Catalyzes the phosphorolysis of single-stranded polyribonucleotides processively in the 3'- to 5'-direction. The chain is Polyribonucleotide nucleotidyltransferase from Francisella tularensis subsp. tularensis (strain WY96-3418).